A 111-amino-acid polypeptide reads, in one-letter code: Large ribosomal subunit protein uL22 (111 aa).

The protein belongs to the universal ribosomal protein uL22 family. In terms of assembly, part of the 50S ribosomal subunit.

Its function is as follows. This protein binds specifically to 23S rRNA; its binding is stimulated by other ribosomal proteins, e.g. L4, L17, and L20. It is important during the early stages of 50S assembly. It makes multiple contacts with different domains of the 23S rRNA in the assembled 50S subunit and ribosome. The globular domain of the protein is located near the polypeptide exit tunnel on the outside of the subunit, while an extended beta-hairpin is found that lines the wall of the exit tunnel in the center of the 70S ribosome. This Geotalea uraniireducens (strain Rf4) (Geobacter uraniireducens) protein is Large ribosomal subunit protein uL22.